A 141-amino-acid polypeptide reads, in one-letter code: Large ribosomal subunit protein uL11 (141 aa).

It belongs to the universal ribosomal protein uL11 family. In terms of assembly, part of the ribosomal stalk of the 50S ribosomal subunit. Interacts with L10 and the large rRNA to form the base of the stalk. L10 forms an elongated spine to which L12 dimers bind in a sequential fashion forming a multimeric L10(L12)X complex. One or more lysine residues are methylated.

Forms part of the ribosomal stalk which helps the ribosome interact with GTP-bound translation factors. In Synechococcus sp. (strain CC9902), this protein is Large ribosomal subunit protein uL11.